The sequence spans 287 residues: MATSNSKPTQVLLATFLTFFFLLLNNVNSSDELSFTINNFVPNEADLLFQGEASVSSTGVLQLTRVENGQPQKYSVGRALYAAPVRIWDNTTGSVASFSTSFTFVVKAPNPDITSDGLAFYLAPPDSQIPSGSVSKYLGLFNNSNSDSSNQIVAVELDTYFAHSYDPWDPNYRHIGIDVNGIESIKTVQWDWINGGVAFATITYLAPNKTLIASLVYPSNQTTFSVAASVDLKEILPEWVRVGFSAATGYPTEVETHDVLSWSFTSTLEANCDAATENNVHIARYTA.

A signal peptide spans 1 to 29 (MATSNSKPTQVLLATFLTFFFLLLNNVNS). Y74 contacts N-acetyl-alpha-neuraminyl-(2-&gt;3)-beta-D-galactosyl-(1-&gt;4)-beta-D-glucose. Residue N90 is glycosylated (N-linked (GlcNAc...) (paucimannose) asparagine). N-acetyl-alpha-neuraminyl-(2-&gt;3)-beta-D-galactosyl-(1-&gt;4)-beta-D-glucose-binding residues include D116, S133, and K136. N-linked (GlcNAc...) (paucimannose) asparagine glycosylation is present at N142. Residues E156 and D158 each contribute to the Mn(2+) site. Ca(2+) contacts are provided by D158, Y160, D166, and D169. Y160 and D166 together coordinate N-acetyl-alpha-neuraminyl-(2-&gt;3)-beta-D-galactosyl-(1-&gt;4)-beta-D-glucose. Mn(2+)-binding residues include D169 and H174. The N-linked (GlcNAc...) (high mannose) asparagine; partial glycan is linked to N208. N-linked (GlcNAc...) (paucimannose) asparagine; partial glycosylation is present at N220. E253 serves as a coordination point for N-acetyl-alpha-neuraminyl-(2-&gt;3)-beta-D-galactosyl-(1-&gt;4)-beta-D-glucose. Residues 279-287 (NVHIARYTA) constitute a propeptide, removed in mature form.

Belongs to the leguminous lectin family. Homodimer; disulfide-linked. Dimer of homodimers. In terms of processing, the glycosylation on N-90 is determined to by of the high mannose type in PubMed:26003537, while PubMed:27720757 found a paucimannose at this position. Processed at its C-terminus.

In terms of biological role, sialic acid-binding lectin recognizing oligosaccharides containing terminal sialic acid linked via alpha-2,3 bond to penultimate galactose residues. Binds the trisaccharide sequence Neu5Ac-alpha-2,3-Gal-beta-1,4-GlcNAc. Binds fetuin when fully glycosylated but not when the high mannose-type glycans are removed, although the secondary structure is virtually unaffected by deglycosylation of the high mannose-type glycans. The lectin activity may depend on the presence of a single GlcNAc attached to N-90. This Maackia amurensis (Amur maackia) protein is Seed leukoagglutinin.